The following is a 203-amino-acid chain: DNA-directed RNA polymerase subunit gamma (203 aa).

4 residues coordinate Zn(2+): Cys-34, Cys-36, Cys-49, and Cys-52.

Belongs to the RNA polymerase beta' chain family. RpoC1 subfamily. In cyanobacteria the RNAP catalytic core is composed of 2 alpha, 1 beta, 1 beta', 1 gamma and 1 omega subunit. When a sigma factor is associated with the core the holoenzyme is formed, which can initiate transcription. Zn(2+) serves as cofactor.

The catalysed reaction is RNA(n) + a ribonucleoside 5'-triphosphate = RNA(n+1) + diphosphate. Functionally, DNA-dependent RNA polymerase catalyzes the transcription of DNA into RNA using the four ribonucleoside triphosphates as substrates. In Prochlorothrix hollandica, this protein is DNA-directed RNA polymerase subunit gamma (rpoC1).